The following is a 207-amino-acid chain: dTTP/UTP pyrophosphatase (207 aa).

D79 serves as the catalytic Proton acceptor.

This sequence belongs to the Maf family. YhdE subfamily. A divalent metal cation serves as cofactor.

The protein resides in the cytoplasm. The enzyme catalyses dTTP + H2O = dTMP + diphosphate + H(+). It catalyses the reaction UTP + H2O = UMP + diphosphate + H(+). Nucleoside triphosphate pyrophosphatase that hydrolyzes dTTP and UTP. May have a dual role in cell division arrest and in preventing the incorporation of modified nucleotides into cellular nucleic acids. This chain is dTTP/UTP pyrophosphatase, found in Rhodopseudomonas palustris (strain ATCC BAA-98 / CGA009).